A 469-amino-acid chain; its full sequence is Transcription factor phomD' (469 aa).

Positions 14 to 41 form a DNA-binding region, zn(2)-C6 fungal-type; that stretch reads CNACNESKVRCSQRKPTCARCERNGVEC. Positions 49 to 118 are disordered; it reads THKDAPPISM…QQKDEAAAAA (70 aa). Polar residues predominate over residues 82 to 93; that stretch reads KANSNSSSNWHM. The span at 104–118 shows a compositional bias: low complexity; it reads QQQQQQQKDEAAAAA.

It is found in the nucleus. Its function is as follows. Transcription factor; part of the gene cluster that mediates the biosynthesis of the phomopsins, a group of hexapeptide mycotoxins which infects lupins and causes lupinosis disease in livestock. May play a role in the regulation of the production of phomopsins. The protein is Transcription factor phomD' of Diaporthe leptostromiformis (Lupinosis disease fungus).